An 845-amino-acid polypeptide reads, in one-letter code: ATPase morc-1 (845 aa).

ATP contacts are provided by residues N43, 88–90 (SAK), and 97–103 (RYGNGLK). Residue N43 coordinates Mg(2+). Positions 284–311 (AAYNKILDEKNETVKKCEEEKALVMSEI) form a coiled coil. K422 contacts ATP. Disordered stretches follow at residues 566 to 590 (LPQK…SASS) and 628 to 739 (KMEP…GKAV). Over residues 574–590 (SAPSSSDSQNSIRSASS) the composition is skewed to low complexity. Residues 637-646 (HDSHIAEVQR) show a composition bias toward basic and acidic residues.

Predominantly forms monomers and dimers, but multimerizes to form trimers and tetramers upon DNA binding. Expressed in germline and somatic cells.

It is found in the nucleus. It localises to the nuclear body. It catalyses the reaction ATP + H2O = ADP + phosphate + H(+). Binds non-specifically to DNA and forms static foci which grow by recruiting other morc-1 molecules, and thereby stimulates conformational changes and compaction of DNA, which appears to be enhanced by ATP-binding, but does not require ATP activity. Preferentially binds to long DNAs. Compacts and entraps segments of DNA by sequentially forming loops along the DNA, beginning at the free ends of single- and double-tethered DNA. Does not extrude the DNA loops on compacted double-tethered DNA. Involved in gene silencing. Plays a role in germline RNA interference (RNAi), and in particular, the silencing of endogenous small interfering RNA (endo-siRNA) target genes. May play a role in heterochromatin localization and condensation, and the siRNAi-directed trimethylation of 'Lys-9' of histone H3 in hermaphrodite X chromosomes. Promotes transgenerational epigenetic inheritance and germline immortality. The protein is ATPase morc-1 of Caenorhabditis elegans.